The following is a 297-amino-acid chain: 33 kDa chaperonin (297 aa).

2 disulfides stabilise this stretch: C234-C236 and C267-C270.

It belongs to the HSP33 family. Post-translationally, under oxidizing conditions two disulfide bonds are formed involving the reactive cysteines. Under reducing conditions zinc is bound to the reactive cysteines and the protein is inactive.

Its subcellular location is the cytoplasm. Its function is as follows. Redox regulated molecular chaperone. Protects both thermally unfolding and oxidatively damaged proteins from irreversible aggregation. Plays an important role in the bacterial defense system toward oxidative stress. The protein is 33 kDa chaperonin of Pseudoalteromonas atlantica (strain T6c / ATCC BAA-1087).